Reading from the N-terminus, the 68-residue chain is Large ribosomal subunit protein bL31 (68 aa).

4 residues coordinate Zn(2+): Cys-16, Cys-18, Cys-36, and Cys-39.

The protein belongs to the bacterial ribosomal protein bL31 family. Type A subfamily. In terms of assembly, part of the 50S ribosomal subunit. Zn(2+) serves as cofactor.

In terms of biological role, binds the 23S rRNA. The polypeptide is Large ribosomal subunit protein bL31 (Sorangium cellulosum (strain So ce56) (Polyangium cellulosum (strain So ce56))).